Reading from the N-terminus, the 75-residue chain is Large ribosomal subunit protein bL31 (75 aa).

Belongs to the bacterial ribosomal protein bL31 family. Type A subfamily. In terms of assembly, part of the 50S ribosomal subunit.

Its function is as follows. Binds the 23S rRNA. This Rhodopseudomonas palustris (strain BisB18) protein is Large ribosomal subunit protein bL31.